We begin with the raw amino-acid sequence, 283 residues long: ATP synthase gamma chain (283 aa).

This sequence belongs to the ATPase gamma chain family. As to quaternary structure, F-type ATPases have 2 components, CF(1) - the catalytic core - and CF(0) - the membrane proton channel. CF(1) has five subunits: alpha(3), beta(3), gamma(1), delta(1), epsilon(1). CF(0) has three main subunits: a, b and c.

Its subcellular location is the cell membrane. Produces ATP from ADP in the presence of a proton gradient across the membrane. The gamma chain is believed to be important in regulating ATPase activity and the flow of protons through the CF(0) complex. In Clostridium kluyveri (strain NBRC 12016), this protein is ATP synthase gamma chain.